We begin with the raw amino-acid sequence, 221 residues long: MTYPERKAFVSRITNETKIQIAISLHGGHISIPNSILDRPESDVAKQATGSQIIDIQTGIGFLDHMIHALAKHSGWSLIVECIGDLHIDDHHTTEDWGFGSRTGFKEALGHVRGVRRFGTGFAPLDEALSRAVVDLSNRPFAVIDLGLKREKIGDLSCEMIPHFLESFAEAARVTLHVDCLRGFNDHHRSESAFKALAVAIREAISSNGTNDVPSTKGVLM.

The protein belongs to the imidazoleglycerol-phosphate dehydratase family.

The enzyme catalyses D-erythro-1-(imidazol-4-yl)glycerol 3-phosphate = 3-(imidazol-4-yl)-2-oxopropyl phosphate + H2O. Its pathway is amino-acid biosynthesis; L-histidine biosynthesis; L-histidine from 5-phospho-alpha-D-ribose 1-diphosphate: step 6/9. This is Imidazoleglycerol-phosphate dehydratase (HIS3) from Kluyveromyces marxianus (Yeast).